A 218-amino-acid polypeptide reads, in one-letter code: Uridine kinase (218 aa).

Gly16–Thr23 is a binding site for ATP.

The protein belongs to the uridine kinase family.

It localises to the cytoplasm. It catalyses the reaction uridine + ATP = UMP + ADP + H(+). The catalysed reaction is cytidine + ATP = CMP + ADP + H(+). It participates in pyrimidine metabolism; CTP biosynthesis via salvage pathway; CTP from cytidine: step 1/3. The protein operates within pyrimidine metabolism; UMP biosynthesis via salvage pathway; UMP from uridine: step 1/1. This chain is Uridine kinase, found in Limosilactobacillus reuteri (strain DSM 20016) (Lactobacillus reuteri).